Consider the following 139-residue polypeptide: ATP synthase epsilon chain (139 aa).

The protein belongs to the ATPase epsilon chain family. As to quaternary structure, F-type ATPases have 2 components, CF(1) - the catalytic core - and CF(0) - the membrane proton channel. CF(1) has five subunits: alpha(3), beta(3), gamma(1), delta(1), epsilon(1). CF(0) has three main subunits: a, b and c.

It is found in the cell membrane. Functionally, produces ATP from ADP in the presence of a proton gradient across the membrane. The chain is ATP synthase epsilon chain from Streptococcus sanguinis.